The chain runs to 572 residues: DnaJ protein ERDJ3A (572 aa).

The signal sequence occupies residues 1–23; sequence MVRTRLAISVVLVSTLLLLNVKA. The J domain occupies 27–91; the sequence is DPYKVLGVSK…EKRKNYDLYG (65 aa). A coiled-coil region spans residues 394–423; that stretch reads ITVKNLKSAVQELGKLLEGLEKKNKKVSSK. The segment at 419-439 is disordered; it reads KVSSKSQAGQAPNESSEKIPL. Residues 422-432 are compositionally biased toward polar residues; that stretch reads SKSQAGQAPNE. An N-linked (GlcNAc...) asparagine glycan is attached at N431.

As to quaternary structure, interacts with BIP1 and BIP3. The interaction with BIP1 and BIP3 activates the ATPase enzyme activities of BIP1 and BIP3. In terms of processing, not N-glycosylated. As to expression, expressed in roots, leaves, stems, flowers, mature pollen grains and growing pollen tubes.

The protein resides in the endoplasmic reticulum lumen. Regulates protein folding in the endoplasmic reticulum (ER) lumen. Functions probably as a co-molecular chaperone that is required for normal growth of pollen tubes under high-temperature stress. This is DnaJ protein ERDJ3A (ERDJ3A) from Arabidopsis thaliana (Mouse-ear cress).